The following is a 231-amino-acid chain: Phosphatidylserine decarboxylase proenzyme (231 aa).

The Schiff-base intermediate with substrate; via pyruvic acid role is filled by serine 188. The residue at position 188 (serine 188) is a Pyruvic acid (Ser); by autocatalysis.

The protein belongs to the phosphatidylserine decarboxylase family. PSD-A subfamily. In terms of assembly, heterodimer of a large membrane-associated beta subunit and a small pyruvoyl-containing alpha subunit. The cofactor is pyruvate. Post-translationally, is synthesized initially as an inactive proenzyme. Formation of the active enzyme involves a self-maturation process in which the active site pyruvoyl group is generated from an internal serine residue via an autocatalytic post-translational modification. Two non-identical subunits are generated from the proenzyme in this reaction, and the pyruvate is formed at the N-terminus of the alpha chain, which is derived from the carboxyl end of the proenzyme. The post-translation cleavage follows an unusual pathway, termed non-hydrolytic serinolysis, in which the side chain hydroxyl group of the serine supplies its oxygen atom to form the C-terminus of the beta chain, while the remainder of the serine residue undergoes an oxidative deamination to produce ammonia and the pyruvoyl prosthetic group on the alpha chain.

The protein resides in the cell membrane. The enzyme catalyses a 1,2-diacyl-sn-glycero-3-phospho-L-serine + H(+) = a 1,2-diacyl-sn-glycero-3-phosphoethanolamine + CO2. It functions in the pathway phospholipid metabolism; phosphatidylethanolamine biosynthesis; phosphatidylethanolamine from CDP-diacylglycerol: step 2/2. Its function is as follows. Catalyzes the formation of phosphatidylethanolamine (PtdEtn) from phosphatidylserine (PtdSer). The polypeptide is Phosphatidylserine decarboxylase proenzyme (Rickettsia rickettsii (strain Iowa)).